The primary structure comprises 199 residues: uncharacterized protein (199 aa).

A disordered region spans residues 1–41 (MKFKRDENQNSTHHRGNKNNTNNDDDDKEEEEEIINDTTMP). The span at 23-35 (NDDDDKEEEEEII) shows a compositional bias: acidic residues. 3 consecutive transmembrane segments (helical) span residues 73–93 (LILD…FAFW), 96–116 (ISTY…VSFL), and 166–186 (IAIA…SPYL).

The protein resides in the membrane. This is an uncharacterized protein from Dictyostelium discoideum (Social amoeba).